A 232-amino-acid polypeptide reads, in one-letter code: Two-component response regulator ORR4 (232 aa).

One can recognise a Response regulatory domain in the interval 11-147 (HVLAVDDSLI…DMKKLKSHLL (137 aa)). At aspartate 80 the chain carries 4-aspartylphosphate. 2 disordered regions span residues 153-174 (LPMAAAAPDKPPHKPDEAAASA) and 202-232 (AAAMEQEVISSPDQRTKPRLSSTSSGLAVET). The segment covering 209–232 (VISSPDQRTKPRLSSTSSGLAVET) has biased composition (polar residues).

It belongs to the ARR family. Type-A subfamily. Two-component system major event consists of a His-to-Asp phosphorelay between a sensor histidine kinase (HK) and a response regulator (RR). In plants, the His-to-Asp phosphorelay involves an additional intermediate named Histidine-containing phosphotransfer protein (HPt). This multistep phosphorelay consists of a His-Asp-His-Asp sequential transfer of a phosphate group between first a His and an Asp of the HK protein, followed by the transfer to a conserved His of the HPt protein and finally the transfer to an Asp in the receiver domain of the RR protein. As to expression, expressed in mature leaves and flowers, and at low levels in roots and shoots.

Functions as a response regulator involved in His-to-Asp phosphorelay signal transduction system. Phosphorylation of the Asp residue in the receiver domain activates the ability of the protein to promote the transcription of target genes. Type-A response regulators seem to act as negative regulators of the cytokinin signaling. The polypeptide is Two-component response regulator ORR4 (Oryza sativa subsp. indica (Rice)).